The chain runs to 501 residues: UPF0371 protein CD630_08980 (501 aa).

Belongs to the UPF0371 family.

This chain is UPF0371 protein CD630_08980, found in Clostridioides difficile (strain 630) (Peptoclostridium difficile).